The sequence spans 120 residues: Large ribosomal subunit protein uL18 (120 aa).

Belongs to the universal ribosomal protein uL18 family. In terms of assembly, part of the 50S ribosomal subunit; part of the 5S rRNA/L5/L18/L25 subcomplex. Contacts the 5S and 23S rRNAs.

This is one of the proteins that bind and probably mediate the attachment of the 5S RNA into the large ribosomal subunit, where it forms part of the central protuberance. The polypeptide is Large ribosomal subunit protein uL18 (Geobacillus thermodenitrificans (strain NG80-2)).